The chain runs to 493 residues: Glycylpeptide N-tetradecanoyltransferase (493 aa).

A disordered region spans residues 1–30; the sequence is MSDSKDSKGKAPQKPNDAEQTPGGKLTPQA. Residues 82 to 85, 216 to 218, and 224 to 228 each bind tetradecanoyl-CoA; these read FKFW, LCI, and SKRLA. Catalysis depends on leucine 493, which acts as the Proton acceptor; via carboxylate.

The protein belongs to the NMT family. In terms of assembly, monomer.

It is found in the cytoplasm. It catalyses the reaction N-terminal glycyl-[protein] + tetradecanoyl-CoA = N-tetradecanoylglycyl-[protein] + CoA + H(+). Adds a myristoyl group to the N-terminal glycine residue of certain cellular proteins. The chain is Glycylpeptide N-tetradecanoyltransferase (swoF) from Emericella nidulans (strain FGSC A4 / ATCC 38163 / CBS 112.46 / NRRL 194 / M139) (Aspergillus nidulans).